Reading from the N-terminus, the 97-residue chain is Large ribosomal subunit protein bL27 (97 aa).

The propeptide occupies 1–12 (MIKLNLSNLQHF). A disordered region spans residues 13–38 (AHKKGGGSTSNGRDSQAKRLGAKAAD).

The protein belongs to the bacterial ribosomal protein bL27 family. Post-translationally, the N-terminus is cleaved by ribosomal processing cysteine protease Prp.

This is Large ribosomal subunit protein bL27 from Streptococcus equi subsp. equi (strain 4047).